The chain runs to 525 residues: MSEPVSTPEHRIPIRRALVSVYDKTDLEDLVRGLHDAGVELVSTGGSAKLIEGLGLPVTKVEDLTGFPECLDGRVKTLHPRVHAGILADRRLDSHVQQLADLGVEPFDLVVSNLYPFRETVASGATPDECVEQIDIGGPSMVRAAAKNHPSVAIVTSPERYADVLAAVAAGGFTLEQRKVLAAEAFTHTAAYDVAVAGWFASTYVPAEDGWPEFAGETWQKAAVLRYGENPHQDAALYTDSSGGGGLAGAEQLHGKEMSYNNYVDTDAARRAAYDFDEPAVAIIKHANPCGIAVGADVAEAHRRAHECDPVSAFGGVIAVNRPVSVEMARQVADVFTEVIVAPSYDEGAVEILQGKKNIRILRCADPAEERSTELRQISGGVLVQVRDHVDATGDDPSTWTLAAGEPASAEVLADLAFAWTACRAAKSNAILLAKDGASVGIGMGQVNRVDSCRLAVSRAGDRAAGSVAASDAFFPFEDGPQILIDAGVTAIVQPGGSVRDELTVEAAKAAGVTMYFTGTRHFFH.

Positions 10 to 156 constitute an MGS-like domain; it reads HRIPIRRALV…KNHPSVAIVT (147 aa).

It belongs to the PurH family.

It catalyses the reaction (6R)-10-formyltetrahydrofolate + 5-amino-1-(5-phospho-beta-D-ribosyl)imidazole-4-carboxamide = 5-formamido-1-(5-phospho-D-ribosyl)imidazole-4-carboxamide + (6S)-5,6,7,8-tetrahydrofolate. The enzyme catalyses IMP + H2O = 5-formamido-1-(5-phospho-D-ribosyl)imidazole-4-carboxamide. The protein operates within purine metabolism; IMP biosynthesis via de novo pathway; 5-formamido-1-(5-phospho-D-ribosyl)imidazole-4-carboxamide from 5-amino-1-(5-phospho-D-ribosyl)imidazole-4-carboxamide (10-formyl THF route): step 1/1. It participates in purine metabolism; IMP biosynthesis via de novo pathway; IMP from 5-formamido-1-(5-phospho-D-ribosyl)imidazole-4-carboxamide: step 1/1. The sequence is that of Bifunctional purine biosynthesis protein PurH from Nocardioides sp. (strain ATCC BAA-499 / JS614).